A 721-amino-acid chain; its full sequence is Glucans biosynthesis glucosyltransferase H (721 aa).

Helical transmembrane passes span 53-75 (VLIM…QVLQ), 85-107 (VVLV…ALAG), 404-426 (GIGA…LISL), 456-478 (WVFA…LVLI), 490-512 (LRTF…VMMV), and 567-589 (WPLL…VALL).

Belongs to the glycosyltransferase 2 family. OpgH subfamily.

The protein resides in the cell inner membrane. It functions in the pathway glycan metabolism; osmoregulated periplasmic glucan (OPG) biosynthesis. Its function is as follows. Involved in the biosynthesis of osmoregulated periplasmic glucans (OPGs). This Rhodopseudomonas palustris (strain ATCC BAA-98 / CGA009) protein is Glucans biosynthesis glucosyltransferase H.